A 144-amino-acid polypeptide reads, in one-letter code: Small ribosomal subunit protein bS6 (144 aa).

The segment at 97-144 (EEGPSAMMRKADRDRERDERGGPREGGFRSERGPRRPREEETTASVEE) is disordered. Over residues 105–137 (RKADRDRERDERGGPREGGFRSERGPRRPREEE) the composition is skewed to basic and acidic residues.

This sequence belongs to the bacterial ribosomal protein bS6 family.

Its function is as follows. Binds together with bS18 to 16S ribosomal RNA. The sequence is that of Small ribosomal subunit protein bS6 from Afipia carboxidovorans (strain ATCC 49405 / DSM 1227 / KCTC 32145 / OM5) (Oligotropha carboxidovorans).